The following is a 215-amino-acid chain: Transcription factor LAX PANICLE 1 (215 aa).

The tract at residues 1-48 (MHDPRGFPIHPQPYHLHPTAGGLGEGRMRGGGRRRPGAKLSTDPQSVA) is disordered. The interval 40–53 (LSTDPQSVAARERR) is basic motif; degenerate. The bHLH domain occupies 40–89 (LSTDPQSVAARERRHRISDRFRVLRSLVPGGSKMDTVSMLEQAIHYVKFL). A helix-loop-helix motif region spans residues 54 to 89 (HRISDRFRVLRSLVPGGSKMDTVSMLEQAIHYVKFL).

The protein belongs to the bHLH protein family. As to quaternary structure, efficient DNA binding requires dimerization with another bHLH protein. Interacts with LAX2. As to expression, expressed in the boundary between the shoot apical meristem (SAM) and the region of new meristem formation.

Its subcellular location is the nucleus. Transcription factor that seems to regulate organogenesis in postembryonic development. Involved in the regulation of shoot branching by controlling axillary meristem initiation. Functions in association with LAX2 to regulate the process of AM formation. Possesses transactivation activity in yeast. This Oryza sativa subsp. japonica (Rice) protein is Transcription factor LAX PANICLE 1.